A 587-amino-acid chain; its full sequence is Prolycopene isomerase 2, chloroplastic (587 aa).

Residues 1–50 constitute a chloroplast transit peptide; it reads MLCLSLNSSSTSPPKLPLHHSFSRRGIRSWVRSPCVQRKKLGFWSSPKAV.

The protein belongs to the carotenoid/retinoid oxidoreductase family. CrtISO subfamily. It depends on NAD(+) as a cofactor. NADP(+) serves as cofactor. Requires FAD as cofactor. As to expression, up-regulated in the flower buds and flower lip tissue, while it is weakly expressed in leaves.

It is found in the plastid. The protein resides in the chloroplast membrane. It carries out the reaction 7,7',9,9'-tetra-cis-lycopene = all-trans-lycopene. It participates in carotenoid biosynthesis; lycopene biosynthesis. Carotene cis-trans-isomerase that converts 7,9,9'-tri-cis-neurosporene to 9'-cis-neurosporene and 7,9,9',7'-tetra-cis-lycopene (also known as prolycopene) into all-trans-lycopene. Isomerization requires redox-active components, suggesting that isomerization is achieved by a reversible redox reaction acting at specific double bonds. Isomerizes adjacent cis-double bonds at C7 and C9 pairwise into the trans-configuration, but is incapable of isomerizing single cis-double bonds at C9 and C9'. This is Prolycopene isomerase 2, chloroplastic (CRTISO2) from Oncidium hybrid cultivar (Orchid).